Here is a 272-residue protein sequence, read N- to C-terminus: Ribonuclease HII (272 aa).

The 192-residue stretch at 30–221 (GPVAGVDEVG…VRRAAEATGV (192 aa)) folds into the RNase H type-2 domain. The a divalent metal cation site is built by Asp-36, Glu-37, and Asp-130.

It belongs to the RNase HII family. Mn(2+) is required as a cofactor. It depends on Mg(2+) as a cofactor.

Its subcellular location is the cytoplasm. It catalyses the reaction Endonucleolytic cleavage to 5'-phosphomonoester.. Its function is as follows. Endonuclease that specifically degrades the RNA of RNA-DNA hybrids. In Mycolicibacterium smegmatis (strain ATCC 700084 / mc(2)155) (Mycobacterium smegmatis), this protein is Ribonuclease HII.